Consider the following 170-residue polypeptide: Shikimate kinase (170 aa).

15–20 (GAGKTT) contributes to the ATP binding site. A Mg(2+)-binding site is contributed by Thr19. Asp37, Arg61, and Gly83 together coordinate substrate. Arg121 lines the ATP pocket. Arg140 lines the substrate pocket.

The protein belongs to the shikimate kinase family. As to quaternary structure, monomer. Mg(2+) serves as cofactor.

It is found in the cytoplasm. The catalysed reaction is shikimate + ATP = 3-phosphoshikimate + ADP + H(+). Its pathway is metabolic intermediate biosynthesis; chorismate biosynthesis; chorismate from D-erythrose 4-phosphate and phosphoenolpyruvate: step 5/7. In terms of biological role, catalyzes the specific phosphorylation of the 3-hydroxyl group of shikimic acid using ATP as a cosubstrate. The sequence is that of Shikimate kinase from Neisseria gonorrhoeae (strain ATCC 700825 / FA 1090).